Consider the following 213-residue polypeptide: Cell division protein SepF 2 (213 aa).

The interval 16–89 is disordered; that stretch reads EDDGYDGRGF…ASLAAESSRP (74 aa). The span at 27-39 shows a compositional bias: acidic residues; the sequence is PDDDFEPELDPEP.

It belongs to the SepF family. Homodimer. Interacts with FtsZ.

The protein resides in the cytoplasm. Cell division protein that is part of the divisome complex and is recruited early to the Z-ring. Probably stimulates Z-ring formation, perhaps through the cross-linking of FtsZ protofilaments. Its function overlaps with FtsA. The sequence is that of Cell division protein SepF 2 from Streptomyces coelicolor (strain ATCC BAA-471 / A3(2) / M145).